The primary structure comprises 477 residues: Trigger factor (477 aa).

In terms of domain architecture, PPIase FKBP-type spans 169–254; that stretch reads EDRVTIDYLG…VKEVAKPNEL (86 aa). A disordered region spans residues 435 to 477; the sequence is VSKEELTAEDEDAASEAKPAKKAAAKKKAAPKKKAEEGKSEEA. Residues 454 to 466 show a composition bias toward basic residues; the sequence is AKKAAAKKKAAPK. The segment covering 467–477 has biased composition (basic and acidic residues); it reads KKAEEGKSEEA.

It belongs to the FKBP-type PPIase family. Tig subfamily.

Its subcellular location is the cytoplasm. It carries out the reaction [protein]-peptidylproline (omega=180) = [protein]-peptidylproline (omega=0). Involved in protein export. Acts as a chaperone by maintaining the newly synthesized protein in an open conformation. Functions as a peptidyl-prolyl cis-trans isomerase. In Brucella melitensis biotype 1 (strain ATCC 23456 / CCUG 17765 / NCTC 10094 / 16M), this protein is Trigger factor (tig).